A 514-amino-acid polypeptide reads, in one-letter code: Type-2 serine--tRNA ligase (514 aa).

Position 313 (Ala-313) interacts with L-serine. Residue Cys-315 participates in Zn(2+) binding. Arg-344 lines the L-serine pocket. Residues 344-346 (RWE) and 355-356 (RV) contribute to the ATP site. 361–363 (RGE) is a binding site for L-serine. Glu-363 and Cys-470 together coordinate Zn(2+). Arg-477 contacts ATP.

Belongs to the class-II aminoacyl-tRNA synthetase family. Type-2 seryl-tRNA synthetase subfamily. Homodimer. Zn(2+) is required as a cofactor.

The protein localises to the cytoplasm. It catalyses the reaction tRNA(Ser) + L-serine + ATP = L-seryl-tRNA(Ser) + AMP + diphosphate + H(+). The enzyme catalyses tRNA(Sec) + L-serine + ATP = L-seryl-tRNA(Sec) + AMP + diphosphate + H(+). The protein operates within aminoacyl-tRNA biosynthesis; selenocysteinyl-tRNA(Sec) biosynthesis; L-seryl-tRNA(Sec) from L-serine and tRNA(Sec): step 1/1. In terms of biological role, catalyzes the attachment of serine to tRNA(Ser). Is also able to aminoacylate tRNA(Sec) with serine, to form the misacylated tRNA L-seryl-tRNA(Sec), which will be further converted into selenocysteinyl-tRNA(Sec). The polypeptide is Type-2 serine--tRNA ligase (Methanococcus maripaludis (strain C5 / ATCC BAA-1333)).